A 642-amino-acid polypeptide reads, in one-letter code: MPVITLPDGSQRQYDHAVSVLDVALDIGPGLAKACIAGRVNGELVDASDLIESDAQLAIITAKDAEGLEILRHSCAHLLGHAIKQLWPDTKMAIGPVIDNGFYYDVDINRTLTQEDLDLLEKRMHELADKDYDVIKKKVSWQEARDTFAARGEDYKVAILDENISRDDHPGLYHHEEYVDMCRGPHVPNMRFCHHFKLQKTSGAYWRGDSKNKMLQRIYGTAWSDKKQLNAYLQRLEEAAKRDHRKIGKQLDLYHMQEEAPGMVFWHNDGWTIFRELETFVRMKLKEYQYQEVKGPFMMDRVLWEKTGHWENYAEHMFTTSSENREYCIKPMNCPGHVQIFNQGLKSYRDLPLRMAEFGSCHRNEPSGALHGLMRVRGFTQDDAHIFCTEEQVRDEVNSCIKMVYDMYSTFGFEKIVVKLSTRPEKRIGSDDLWTRAEDDLAAALTENGIPFDYQPGEGAFYGPKIEFTLHDCLDRAWQCGTVQLDFSLPGRLSASYIGENNDRQVPVMIHRAILGSMERFIGILTEEYAGFFPTWLAPVQVVVMNITDSQSDYVQQVTKKLQDAGIRAKADLRNEKIGFKIREHTLRRVPYMLVCGDKEVESGKIAVRTRRGKDLGSLDVNVVVDQLLAEIRSRSLHQLEE.

A TGS domain is found at 1 to 61 (MPVITLPDGS…ESDAQLAIIT (61 aa)). A catalytic region spans residues 243 to 534 (DHRKIGKQLD…LTEEYAGFFP (292 aa)). Cys334, His385, and His511 together coordinate Zn(2+).

Belongs to the class-II aminoacyl-tRNA synthetase family. Homodimer. Zn(2+) is required as a cofactor.

It is found in the cytoplasm. It carries out the reaction tRNA(Thr) + L-threonine + ATP = L-threonyl-tRNA(Thr) + AMP + diphosphate + H(+). Its function is as follows. Catalyzes the attachment of threonine to tRNA(Thr) in a two-step reaction: L-threonine is first activated by ATP to form Thr-AMP and then transferred to the acceptor end of tRNA(Thr). Also edits incorrectly charged L-seryl-tRNA(Thr). In Yersinia enterocolitica serotype O:8 / biotype 1B (strain NCTC 13174 / 8081), this protein is Threonine--tRNA ligase.